The following is a 173-amino-acid chain: Ribosome maturation factor RimP (173 aa).

The protein belongs to the RimP family.

The protein localises to the cytoplasm. Required for maturation of 30S ribosomal subunits. In Pelodictyon phaeoclathratiforme (strain DSM 5477 / BU-1), this protein is Ribosome maturation factor RimP.